The sequence spans 134 residues: Ribonuclease VapC2 (134 aa).

A PINc domain is found at 3–124 (YMLDTNICVY…TNNIKEFKRI (122 aa)). Asp-6 contributes to the Mg(2+) binding site.

This sequence belongs to the PINc/VapC protein family. As to quaternary structure, forms complexes with VapB2; probably VapC2(4):VapB2(2) in the absence of DNA, and VapC2(4):VapB2(4) in the presence of DNA. Crystallizes as heterodimers with stoichiometry VapC2(4):VapB2(4) in the presence of its probable promoter DNA. The heterodimers are in contact via alternative VapC-VapC and VapB-VapB interactions. This subunit does not contact DNA. Mg(2+) is required as a cofactor.

In terms of biological role, toxic component of a type II toxin-antitoxin (TA) system. Has ssRNase activity. Upon expression in E.coli or S.cerevisiae inhibits growth in liquid culture; in S.cerevisiae its expression leads to apoptosis-like characteristics. Rapidly induces apoptosis (within 2 hours) upon microinjection into mouse fibroblasts (L929 line); pretreatment of cells with dexamethasone protects them. Probably contributes to host cell death if bacterial cell lysis occurs during host infection. Its toxic effect is neutralized by coexpression with cognate antitoxin VapB2, its RNase activity is partially inhibited in vitro by VapB2. The chain is Ribonuclease VapC2 from Rickettsia felis (strain ATCC VR-1525 / URRWXCal2) (Rickettsia azadi).